The chain runs to 90 residues: UPF0213 protein lin0209 (90 aa).

The GIY-YIG domain occupies 5 to 80 (NEHFFYVLKC…KKLSRKNKDS (76 aa)).

Belongs to the UPF0213 family.

This chain is UPF0213 protein lin0209, found in Listeria innocua serovar 6a (strain ATCC BAA-680 / CLIP 11262).